A 213-amino-acid polypeptide reads, in one-letter code: Germin-like protein 8-14 (213 aa).

Positions methionine 1–alanine 23 are cleaved as a signal peptide. Cysteine 29 and cysteine 44 are disulfide-bonded. The 148-residue stretch at histidine 56–lysine 203 folds into the Cupin type-1 domain. Asparagine 63 is a glycosylation site (N-linked (GlcNAc...) asparagine). Mn(2+)-binding residues include histidine 104, histidine 106, glutamate 111, and histidine 151.

The protein belongs to the germin family. In terms of assembly, oligomer (believed to be a pentamer but probably hexamer). In terms of processing, phosphorylated on threonine residue.

It localises to the secreted. The protein localises to the extracellular space. The protein resides in the apoplast. Its function is as follows. May play a role in plant defense. Probably has no oxalate oxidase activity even if the active site is conserved. This is Germin-like protein 8-14 (GER5) from Oryza sativa subsp. japonica (Rice).